We begin with the raw amino-acid sequence, 637 residues long: Poly(U)-binding-splicing factor hfp (637 aa).

Basic and acidic residues-rich tracts occupy residues Met1–Ser20 and Thr28–Asp37. A disordered region spans residues Met1–Pro41. 2 positions are modified to phosphoserine: Ser13 and Ser30. RRM domains are found at residues Cys130–Asn208 and Asn227–Thr305. An RRM 3; atypical domain is found at Arg537–Gln627.

Belongs to the RRM half pint family. In terms of assembly, interacts with enc. However, given the cytoplasmic localization of enc, the relevance of such interaction is unclear. In terms of tissue distribution, expressed in all germline cells and within the follicle cell.

It is found in the nucleus. In terms of biological role, splicing factor that regulates oogenesis and controls both mitosis and mRNA localization in the germline by regulating mRNA splicing of a subset of genes within the ovary. Probably acts by regulating the alternative splice site selection of the otu transcript. Also regulates the alternative splicing of eIF4E1 and grk, while it is not involved in the splicing of par-1, sqd or psq. Involved in the alternative splicing of the bicistronic pre-mRNA encoding Kdm3 and CG8176; required for the efficient production of mRNA encoding Kdm3 and Kdm3-mediated regulation of rhino-dependent piRNA production. The polypeptide is Poly(U)-binding-splicing factor hfp (Drosophila melanogaster (Fruit fly)).